Consider the following 377-residue polypeptide: Modification methylase CviBIII (377 aa).

The protein belongs to the N(4)/N(6)-methyltransferase family.

It carries out the reaction a 2'-deoxyadenosine in DNA + S-adenosyl-L-methionine = an N(6)-methyl-2'-deoxyadenosine in DNA + S-adenosyl-L-homocysteine + H(+). In terms of biological role, a gamma subtype methylase that recognizes the double-stranded sequence 5'-TCGA-3' and methylates A-4 on both strands. The sequence is that of Modification methylase CviBIII (CVIBIIIM) from Paramecium bursaria Chlorella virus NC1A (PBCV-NC1A).